A 191-amino-acid chain; its full sequence is Holliday junction branch migration complex subunit RuvA (191 aa).

A domain I region spans residues 1–64 (MIGSITGNVE…DNITQLYGFL (64 aa)). A domain II region spans residues 65–142 (NRQEQDYFKM…KMPIEETFSI (78 aa)). Residues 143 to 146 (IEND) form a flexible linker region. The domain III stretch occupies residues 146–191 (DDSLAALISLGYEKLKAFNVIQEIKSKTPDASTQEVIRKALQKLSQ).

This sequence belongs to the RuvA family. As to quaternary structure, homotetramer. Forms an RuvA(8)-RuvB(12)-Holliday junction (HJ) complex. HJ DNA is sandwiched between 2 RuvA tetramers; dsDNA enters through RuvA and exits via RuvB. An RuvB hexamer assembles on each DNA strand where it exits the tetramer. Each RuvB hexamer is contacted by two RuvA subunits (via domain III) on 2 adjacent RuvB subunits; this complex drives branch migration. In the full resolvosome a probable DNA-RuvA(4)-RuvB(12)-RuvC(2) complex forms which resolves the HJ.

Its subcellular location is the cytoplasm. The RuvA-RuvB-RuvC complex processes Holliday junction (HJ) DNA during genetic recombination and DNA repair, while the RuvA-RuvB complex plays an important role in the rescue of blocked DNA replication forks via replication fork reversal (RFR). RuvA specifically binds to HJ cruciform DNA, conferring on it an open structure. The RuvB hexamer acts as an ATP-dependent pump, pulling dsDNA into and through the RuvAB complex. HJ branch migration allows RuvC to scan DNA until it finds its consensus sequence, where it cleaves and resolves the cruciform DNA. The protein is Holliday junction branch migration complex subunit RuvA of Ehrlichia ruminantium (strain Gardel).